The chain runs to 527 residues: Probable feruloyl esterase B-2 (527 aa).

The signal sequence occupies residues 1 to 19 (MAPIHYLLPIITLGSAALA). Disulfide bonds link Cys-28-Cys-75 and Cys-63-Cys-114. N-linked (GlcNAc...) asparagine glycans are attached at residues Asn-53, Asn-85, Asn-98, Asn-138, and Asn-180. 4 cysteine pairs are disulfide-bonded: Cys-187–Cys-441, Cys-256–Cys-273, Cys-282–Cys-291, and Cys-503–Cys-525. Ser-188 serves as the catalytic Acyl-ester intermediate. Residues Asp-257, Asp-260, Ala-262, Asp-264, and Ile-266 each contribute to the Ca(2+) site. Residues Asn-311 and Asn-355 are each glycosylated (N-linked (GlcNAc...) asparagine). Residues Asp-400 and His-440 each act as charge relay system in the active site. Asn-516 carries an N-linked (GlcNAc...) asparagine glycan.

Belongs to the tannase family.

The protein localises to the secreted. The catalysed reaction is feruloyl-polysaccharide + H2O = ferulate + polysaccharide.. In terms of biological role, involved in degradation of plant cell walls. Hydrolyzes the feruloyl-arabinose ester bond in arabinoxylans as well as the feruloyl-galactose and feruloyl-arabinose ester bonds in pectin. The sequence is that of Probable feruloyl esterase B-2 (faeB-2) from Aspergillus terreus (strain NIH 2624 / FGSC A1156).